The chain runs to 37 residues: Large ribosomal subunit protein bL36 (37 aa).

The protein belongs to the bacterial ribosomal protein bL36 family.

The protein is Large ribosomal subunit protein bL36 of Laribacter hongkongensis (strain HLHK9).